The primary structure comprises 450 residues: Bifunctional protein GlmU (450 aa).

The tract at residues 1–229 (MRRHAIILAA…VEEIMGVNDR (229 aa)) is pyrophosphorylase. UDP-N-acetyl-alpha-D-glucosamine is bound by residues 8 to 11 (LAAG), K22, Q72, and 77 to 78 (GT). D102 lines the Mg(2+) pocket. UDP-N-acetyl-alpha-D-glucosamine-binding residues include G139, E154, and N227. N227 is a Mg(2+) binding site. The linker stretch occupies residues 230 to 250 (VMLSQAEKAMQRRTNHYHMLN). An N-acetyltransferase region spans residues 251 to 450 (GVTIIDPDST…RQTTKEGYRK (200 aa)). R332 and K350 together coordinate UDP-N-acetyl-alpha-D-glucosamine. The Proton acceptor role is filled by H362. Residues Y365 and N376 each coordinate UDP-N-acetyl-alpha-D-glucosamine. Residues 385-386 (NY), A422, and R439 each bind acetyl-CoA.

This sequence in the N-terminal section; belongs to the N-acetylglucosamine-1-phosphate uridyltransferase family. In the C-terminal section; belongs to the transferase hexapeptide repeat family. In terms of assembly, homotrimer. It depends on Mg(2+) as a cofactor.

The protein resides in the cytoplasm. It catalyses the reaction alpha-D-glucosamine 1-phosphate + acetyl-CoA = N-acetyl-alpha-D-glucosamine 1-phosphate + CoA + H(+). The enzyme catalyses N-acetyl-alpha-D-glucosamine 1-phosphate + UTP + H(+) = UDP-N-acetyl-alpha-D-glucosamine + diphosphate. It participates in nucleotide-sugar biosynthesis; UDP-N-acetyl-alpha-D-glucosamine biosynthesis; N-acetyl-alpha-D-glucosamine 1-phosphate from alpha-D-glucosamine 6-phosphate (route II): step 2/2. It functions in the pathway nucleotide-sugar biosynthesis; UDP-N-acetyl-alpha-D-glucosamine biosynthesis; UDP-N-acetyl-alpha-D-glucosamine from N-acetyl-alpha-D-glucosamine 1-phosphate: step 1/1. The protein operates within bacterial outer membrane biogenesis; LPS lipid A biosynthesis. Functionally, catalyzes the last two sequential reactions in the de novo biosynthetic pathway for UDP-N-acetylglucosamine (UDP-GlcNAc). The C-terminal domain catalyzes the transfer of acetyl group from acetyl coenzyme A to glucosamine-1-phosphate (GlcN-1-P) to produce N-acetylglucosamine-1-phosphate (GlcNAc-1-P), which is converted into UDP-GlcNAc by the transfer of uridine 5-monophosphate (from uridine 5-triphosphate), a reaction catalyzed by the N-terminal domain. This is Bifunctional protein GlmU from Staphylococcus aureus (strain NCTC 8325 / PS 47).